We begin with the raw amino-acid sequence, 493 residues long: Ribonuclease Y (493 aa).

The helical transmembrane segment at 19-39 (IFAILFLIIVILNLGLLVFLA) threads the bilayer. One can recognise a KH domain in the interval 172 to 241 (SASFTVIESD…LTIRNILIND (70 aa)). The HD domain maps to 300-392 (VLSHCLETGF…TQIGDKLSAG (93 aa)).

This sequence belongs to the RNase Y family.

It is found in the cell membrane. Endoribonuclease that initiates mRNA decay. The polypeptide is Ribonuclease Y (Mycoplasma pneumoniae (strain ATCC 29342 / M129 / Subtype 1) (Mycoplasmoides pneumoniae)).